The primary structure comprises 840 residues: Probable inorganic carbon transporter subunit DabA (840 aa).

4 residues coordinate Zn(2+): Cys-355, Asp-357, His-539, and Cys-554.

The protein belongs to the inorganic carbon transporter (TC 9.A.2) DabA family. Forms a complex with DabB. Zn(2+) is required as a cofactor.

The protein resides in the cell membrane. Functionally, part of an energy-coupled inorganic carbon pump. The protein is Probable inorganic carbon transporter subunit DabA of Roseiflexus castenholzii (strain DSM 13941 / HLO8).